Here is a 72-residue protein sequence, read N- to C-terminus: SRY-related protein AES1 (72 aa).

Residues 1–69 (VKRPMNAFMV…KHMADYPDYK (69 aa)) constitute a DNA-binding region (HMG box).

It is found in the nucleus. The polypeptide is SRY-related protein AES1 (Alligator mississippiensis (American alligator)).